We begin with the raw amino-acid sequence, 163 residues long: Photosystem II extrinsic protein V (163 aa).

The first 26 residues, 1-26 (MLKKCVWLAVALCLCLWQFTMGTALA), serve as a signal peptide directing secretion. The heme c site is built by histidine 67 and histidine 118.

The protein belongs to the cytochrome c family. PsbV subfamily. As to quaternary structure, PSII is composed of 1 copy each of membrane proteins PsbA, PsbB, PsbC, PsbD, PsbE, PsbF, PsbH, PsbI, PsbJ, PsbK, PsbL, PsbM, PsbT, PsbX, PsbY, PsbZ, Psb30/Ycf12, peripheral proteins PsbO, CyanoQ (PsbQ), PsbU, PsbV and a large number of cofactors. It forms dimeric complexes. It depends on heme c as a cofactor.

It is found in the cellular thylakoid membrane. In terms of biological role, one of the extrinsic, lumenal subunits of photosystem II (PSII). PSII is a light-driven water plastoquinone oxidoreductase, using light energy to abstract electrons from H(2)O, generating a proton gradient subsequently used for ATP formation. The extrinsic proteins stabilize the structure of photosystem II oxygen-evolving complex (OEC), the ion environment of oxygen evolution and protect the OEC against heat-induced inactivation. Low-potential cytochrome c that plays a role in the OEC of PSII. The chain is Photosystem II extrinsic protein V from Thermosynechococcus vestitus (strain NIES-2133 / IAM M-273 / BP-1).